The following is a 218-amino-acid chain: ADP-sugar pyrophosphatase (218 aa).

Met1 carries the post-translational modification N-acetylmethionine. Position 10 is a phosphoserine (Ser10). Trp27 provides a ligand contact to substrate. Lys41 participates in a covalent cross-link: Glycyl lysine isopeptide (Lys-Gly) (interchain with G-Cter in SUMO2). Position 44 is a phosphothreonine (Thr44). Substrate is bound by residues 45 to 46 (WE) and Arg83. Positions 56–196 (KSADAVSVIP…EQHLTVDAKV (141 aa)) constitute a Nudix hydrolase domain. Mg(2+) is bound at residue Ala95. The short motif at 96 to 117 (GFIEDGESPEAAALRELEEETG) is the Nudix box element. Phe97 lines the substrate pocket. 2 residues coordinate Mg(2+): Glu111 and Glu115. Asp132 contacts substrate. Glu165 serves as a coordination point for Mg(2+). Residues Lys209 and Lys217 each carry the N6-acetyllysine modification.

This sequence belongs to the Nudix hydrolase family. As to quaternary structure, homodimer. Interacts with PARG. Requires Mg(2+) as cofactor. Phosphorylation at Thr-44 is required for homodimer stability; dephosphorylation results in destabilization of the homodimer. Dephosphorylation at Thr-44 promotes the ATP-synthesis activity. As to expression, widely expressed. Most abundant in liver.

It is found in the nucleus. It catalyses the reaction D-ribose 5-phosphate + ATP + H(+) = ADP-D-ribose + diphosphate. The catalysed reaction is ADP-D-ribose + H2O = D-ribose 5-phosphate + AMP + 2 H(+). The enzyme catalyses 8-oxo-dGDP + H2O = 8-oxo-dGMP + phosphate + H(+). In terms of biological role, enzyme that can either act as an ADP-sugar pyrophosphatase in absence of diphosphate or catalyze the synthesis of ATP in presence of diphosphate. In absence of diphosphate, hydrolyzes with similar activities various modified nucleoside diphosphates such as ADP-ribose, ADP-mannose, ADP-glucose, 8-oxo-GDP and 8-oxo-dGDP. Can also hydrolyze other nucleotide sugars with low activity. In presence of diphosphate, mediates the synthesis of ATP in the nucleus by catalyzing the conversion of ADP-ribose to ATP and ribose 5-phosphate. Nuclear ATP synthesis takes place when dephosphorylated at Thr-44. Nuclear ATP generation is required for extensive chromatin remodeling events that are energy-consuming. Does not play a role in U8 snoRNA decapping activity. Binds U8 snoRNA. In Mus musculus (Mouse), this protein is ADP-sugar pyrophosphatase.